Reading from the N-terminus, the 80-residue chain is uncharacterized protein (80 aa).

This is an uncharacterized protein from Pseudoalteromonas phage PM2 (Bacteriophage PM2).